A 359-amino-acid polypeptide reads, in one-letter code: Endoglucanase 1 (359 aa).

2 disordered regions span residues 1-26 (MENP…RGGR) and 47-72 (TGAS…DAGT). Residues 13–24 (LRRRRSERRARG) show a composition bias toward basic residues. The segment covering 60-72 (APSADSGTADAGT) has biased composition (low complexity). The active site involves D154. Cysteines 155 and 199 form a disulfide. The Proton donor role is filled by D192. D339 serves as the catalytic Nucleophile.

This sequence belongs to the glycosyl hydrolase 6 (cellulase B) family.

It carries out the reaction Endohydrolysis of (1-&gt;4)-beta-D-glucosidic linkages in cellulose, lichenin and cereal beta-D-glucans.. CMCase I preferentially hydrolyzes carboxymethyl cellulose (CMC). The chain is Endoglucanase 1 (casA) from Streptomyces sp. (strain KSM-9).